A 383-amino-acid polypeptide reads, in one-letter code: S-adenosylmethionine synthase (383 aa).

Position 15 (H15) interacts with ATP. D17 contacts Mg(2+). E43 provides a ligand contact to K(+). Residues E56 and Q99 each contribute to the L-methionine site. Residues 99–109 (QSPDINQGVDK) are flexible loop. ATP contacts are provided by residues 164–166 (DAK), 230–231 (RF), D239, 245–246 (RK), A262, and K266. D239 serves as a coordination point for L-methionine. Residue K270 participates in L-methionine binding.

Belongs to the AdoMet synthase family. In terms of assembly, homotetramer; dimer of dimers. Mg(2+) serves as cofactor. It depends on K(+) as a cofactor.

Its subcellular location is the cytoplasm. It catalyses the reaction L-methionine + ATP + H2O = S-adenosyl-L-methionine + phosphate + diphosphate. It participates in amino-acid biosynthesis; S-adenosyl-L-methionine biosynthesis; S-adenosyl-L-methionine from L-methionine: step 1/1. Catalyzes the formation of S-adenosylmethionine (AdoMet) from methionine and ATP. The overall synthetic reaction is composed of two sequential steps, AdoMet formation and the subsequent tripolyphosphate hydrolysis which occurs prior to release of AdoMet from the enzyme. This Vibrio atlanticus (strain LGP32) (Vibrio splendidus (strain Mel32)) protein is S-adenosylmethionine synthase.